Reading from the N-terminus, the 247-residue chain is Triosephosphate isomerase (247 aa).

Substrate-binding residues include N10 and K12. The Electrophile role is filled by H94. E164 functions as the Proton acceptor in the catalytic mechanism.

Belongs to the triosephosphate isomerase family. In terms of assembly, homodimer.

It carries out the reaction D-glyceraldehyde 3-phosphate = dihydroxyacetone phosphate. It participates in carbohydrate biosynthesis; gluconeogenesis. The protein operates within carbohydrate degradation; glycolysis; D-glyceraldehyde 3-phosphate from glycerone phosphate: step 1/1. This Drosophila simulans (Fruit fly) protein is Triosephosphate isomerase (Tpi).